A 144-amino-acid chain; its full sequence is Large ribosomal subunit protein uL13 (144 aa).

The protein belongs to the universal ribosomal protein uL13 family. In terms of assembly, part of the 50S ribosomal subunit.

Functionally, this protein is one of the early assembly proteins of the 50S ribosomal subunit, although it is not seen to bind rRNA by itself. It is important during the early stages of 50S assembly. The protein is Large ribosomal subunit protein uL13 of Magnetococcus marinus (strain ATCC BAA-1437 / JCM 17883 / MC-1).